We begin with the raw amino-acid sequence, 2108 residues long: Kinesin-like protein KIF26B (2108 aa).

2 disordered regions span residues 1-124 (MNSV…PGSD) and 263-287 (KHGS…PTHQ). Residues 40–50 (WYRKAYEESRA) are compositionally biased toward basic and acidic residues. Positions 58 to 98 (GAGSALGSSGTPSPGSGTSSPSSFTGSPGPASPGIGTSSPG) are enriched in low complexity. Positions 99-120 (SLGGSPGFGTGSPGSGSGGGSS) are enriched in gly residues. Residues 450 to 801 (KVKVMLRICS…IQIASRVLRM (352 aa)) enclose the Kinesin motor domain. An ATP-binding site is contributed by 546–553 (GHAKLGKS). 7 disordered regions span residues 805–825 (KTKY…GRMR), 876–917 (SDKE…GKSE), 937–1166 (DGSE…ESKK), 1406–1504 (EPEA…PVTD), 1519–1653 (GLAT…SSSK), 1685–1799 (AESL…ASKL), and 1824–1974 (RAGP…WVDG). The span at 1004–1046 (SHSPVPAAAPAHSPSPASPRSVPGSSSQHSASPLVQSPSLQSS) shows a compositional bias: low complexity. The segment covering 1424–1461 (RESKENSAKKEMKFEDPWLKREEEVKKETAHPNEEGMM) has biased composition (basic and acidic residues). Residues 1491–1500 (SSSSGEVSAS) show a composition bias toward low complexity. 2 stretches are compositionally biased toward polar residues: residues 1521–1537 (ATQS…SSSL) and 1611–1628 (RASP…SPLN). 2 stretches are compositionally biased toward low complexity: residues 1713–1730 (SAGT…AGQS) and 1751–1763 (STTK…TKSL). The segment covering 1781-1795 (PWSTQSLSRNRSSGL) has biased composition (polar residues). The span at 1824–1836 (RAGPEAEARGGAL) shows a compositional bias: low complexity. Threonine 1855 is subject to Phosphothreonine. Composition is skewed to polar residues over residues 1866–1875 (GHGSDNSSVL) and 1907–1925 (ATGS…SSSV). The segment covering 1930-1948 (RSLKTPKKRSNPGSQRRRL) has biased composition (basic residues). The span at 1954-1968 (LDTSSPVRKPPNSTG) shows a compositional bias: polar residues. A Phosphoserine modification is found at serine 1958.

It belongs to the TRAFAC class myosin-kinesin ATPase superfamily. Kinesin family. KIF26 subfamily. Interacts with MYH10. Post-translationally, phosphorylation at Thr-1855 and Ser-1958 by CDKs, mainly CDK2 and CDK5, enhances the interaction with NEDD4, polyubiquitination, and subsequent proteasomal degradation. Phosphorylation occurs upon loss of interaction with microtubules. Polyubiquitinated by NEDD4, resulting in proteasomal degradation.

The protein localises to the cytoplasm. It localises to the cytoskeleton. Essential for embryonic kidney development. Plays an important role in the compact adhesion between mesenchymal cells adjacent to the ureteric buds, possibly by interacting with MYH10. This could lead to the establishment of the basolateral integrity of the mesenchyme and the polarized expression of ITGA8, which maintains the GDNF expression required for further ureteric bud attraction. Although it seems to lack ATPase activity it is constitutively associated with microtubules. In Homo sapiens (Human), this protein is Kinesin-like protein KIF26B (KIF26B).